A 224-amino-acid polypeptide reads, in one-letter code: Urease accessory protein UreF (224 aa).

This sequence belongs to the UreF family. As to quaternary structure, ureD, UreF and UreG form a complex that acts as a GTP-hydrolysis-dependent molecular chaperone, activating the urease apoprotein by helping to assemble the nickel containing metallocenter of UreC. The UreE protein probably delivers the nickel.

The protein localises to the cytoplasm. In terms of biological role, required for maturation of urease via the functional incorporation of the urease nickel metallocenter. The sequence is that of Urease accessory protein UreF from Klebsiella pneumoniae (strain 342).